We begin with the raw amino-acid sequence, 208 residues long: Large ribosomal subunit protein bL25 (208 aa).

The interval Met-1–Arg-20 is disordered.

Belongs to the bacterial ribosomal protein bL25 family. CTC subfamily. Part of the 50S ribosomal subunit; part of the 5S rRNA/L5/L18/L25 subcomplex. Contacts the 5S rRNA. Binds to the 5S rRNA independently of L5 and L18.

This is one of the proteins that binds to the 5S RNA in the ribosome where it forms part of the central protuberance. The chain is Large ribosomal subunit protein bL25 from Xylella fastidiosa (strain 9a5c).